The primary structure comprises 107 residues: Nucleoid-associated protein NE0434 (107 aa).

Belongs to the YbaB/EbfC family. In terms of assembly, homodimer.

The protein localises to the cytoplasm. The protein resides in the nucleoid. Its function is as follows. Binds to DNA and alters its conformation. May be involved in regulation of gene expression, nucleoid organization and DNA protection. The polypeptide is Nucleoid-associated protein NE0434 (Nitrosomonas europaea (strain ATCC 19718 / CIP 103999 / KCTC 2705 / NBRC 14298)).